The following is a 148-amino-acid chain: UPF0260 protein PM0539 (148 aa).

The protein belongs to the UPF0260 family.

The chain is UPF0260 protein PM0539 from Pasteurella multocida (strain Pm70).